The primary structure comprises 285 residues: Trypsin Tyr p 3.0101 (285 aa).

An N-terminal signal peptide occupies residues 1–16; the sequence is MKILLFLCFLVSVAFA. Positions 17–33 are excised as a propeptide; sequence KPPTIQLKSNTKSQNGF. Residues 34–262 enclose the Peptidase S1 domain; it reads IVGGTEAVDG…YLDWIELSAK (229 aa). Cys58 and Cys74 are oxidised to a cystine. Residues His73 and Asp120 each act as charge relay system in the active site. Intrachain disulfides connect Cys186/Cys202 and Cys214/Cys238. Ser218 serves as the catalytic Charge relay system.

This sequence belongs to the peptidase S1 family.

Its subcellular location is the secreted. The catalysed reaction is Preferential cleavage: Arg-|-Xaa, Lys-|-Xaa.. Its activity is regulated as follows. Inhibited by the serine protease inhibitor phenylmethylsulfonyl, and trypsin inhibitors soybean trypsin inhibitor and tosyllysine chloromethyl ketone. Not inhibited by dithiothreitol, a cysteine protease inhibitor. Digests TAMe (p-toluene arginine methyl ester), but not ethyl N-benzoyl-L-tyrosinate (BTEE). In Tyrophagus putrescentiae (Mold mite), this protein is Trypsin Tyr p 3.0101.